A 207-amino-acid polypeptide reads, in one-letter code: Large ribosomal subunit protein uL4 (207 aa).

It belongs to the universal ribosomal protein uL4 family. As to quaternary structure, part of the 50S ribosomal subunit.

One of the primary rRNA binding proteins, this protein initially binds near the 5'-end of the 23S rRNA. It is important during the early stages of 50S assembly. It makes multiple contacts with different domains of the 23S rRNA in the assembled 50S subunit and ribosome. Functionally, forms part of the polypeptide exit tunnel. The polypeptide is Large ribosomal subunit protein uL4 (Geobacter sulfurreducens (strain ATCC 51573 / DSM 12127 / PCA)).